Here is a 178-residue protein sequence, read N- to C-terminus: MKTAKGKDKVKTTKEALKPVDDRKVGKRKAPAEKPTKRETRKEKKAKKDPNKPKRAPSAFFVFLEDFRVTFKKENPNVKAVSAVGKAGGQKWKSMSQAEKAPYEEKAAKRKAEYEKQMDAYNKNLEEGSDESEKSRSEINDEDEASGEEELLEKEAAGDDEEEEEEEDDDDDDDEEED.

2 stretches are compositionally biased toward basic and acidic residues: residues 1–52 (MKTA…DPNK) and 101–118 (APYE…EKQM). 2 disordered regions span residues 1-59 (MKTA…APSA) and 75-178 (NPNV…EEED). A DNA-binding region (HMG box) is located at residues 53-122 (PKRAPSAFFV…EYEKQMDAYN (70 aa)). 2 positions are modified to phosphoserine: S137 and S146. Residues 140-178 (NDEDEASGEEELLEKEAAGDDEEEEEEEDDDDDDDEEED) are compositionally biased toward acidic residues.

This sequence belongs to the HMGB family. Expressed in cotyledons, roots, stems, leaves and flowers (excluding pedicels).

It is found in the nucleus. In terms of biological role, binds preferentially double-stranded DNA. Modulates general plant growth and stress tolerance. Confers sensitivity to salt and genotoxic (methyl methanesulfonate, MMS) stresses. This chain is High mobility group B protein 1 (HMGB1), found in Arabidopsis thaliana (Mouse-ear cress).